A 327-amino-acid polypeptide reads, in one-letter code: Acetaldehyde dehydrogenase 6 (327 aa).

15–18 (SGNI) provides a ligand contact to NAD(+). Cysteine 133 functions as the Acyl-thioester intermediate in the catalytic mechanism. NAD(+) contacts are provided by residues 164-172 (SAGPGTRAN) and asparagine 297.

Belongs to the acetaldehyde dehydrogenase family.

It catalyses the reaction acetaldehyde + NAD(+) + CoA = acetyl-CoA + NADH + H(+). In Rhodococcus opacus (strain B4), this protein is Acetaldehyde dehydrogenase 6.